We begin with the raw amino-acid sequence, 212 residues long: Glycerol-3-phosphate acyltransferase (212 aa).

A run of 5 helical transmembrane segments spans residues 3 to 23 (LILLIIAAYLLGSIPTGLWIG), 69 to 89 (LLPMWLGVTHISPLLFGFFAI), 110 to 130 (AGILLGFAPFYLIFLLFIFFF), 143 to 163 (VIAASIAIITVLIFPALHFLL), and 165 to 185 (DYDFLFVLIVISAGSLIIIRH).

Belongs to the PlsY family. In terms of assembly, probably interacts with PlsX.

It is found in the cell membrane. The catalysed reaction is an acyl phosphate + sn-glycerol 3-phosphate = a 1-acyl-sn-glycero-3-phosphate + phosphate. It participates in lipid metabolism; phospholipid metabolism. Its function is as follows. Catalyzes the transfer of an acyl group from acyl-phosphate (acyl-PO(4)) to glycerol-3-phosphate (G3P) to form lysophosphatidic acid (LPA). This enzyme utilizes acyl-phosphate as fatty acyl donor, but not acyl-CoA or acyl-ACP. The protein is Glycerol-3-phosphate acyltransferase of Streptococcus mutans serotype c (strain ATCC 700610 / UA159).